Consider the following 162-residue polypeptide: Phosphopantetheine adenylyltransferase (162 aa).

Serine 9 contacts substrate. ATP contacts are provided by residues 9–10 (SF) and histidine 17. 3 residues coordinate substrate: lysine 41, isoleucine 77, and lysine 91. Residues 92–94 (GLR), glutamate 102, and 126–132 (YAFLSSS) each bind ATP.

This sequence belongs to the bacterial CoaD family. Homohexamer. Requires Mg(2+) as cofactor.

Its subcellular location is the cytoplasm. It catalyses the reaction (R)-4'-phosphopantetheine + ATP + H(+) = 3'-dephospho-CoA + diphosphate. It functions in the pathway cofactor biosynthesis; coenzyme A biosynthesis; CoA from (R)-pantothenate: step 4/5. Its function is as follows. Reversibly transfers an adenylyl group from ATP to 4'-phosphopantetheine, yielding dephospho-CoA (dPCoA) and pyrophosphate. In Frankia casuarinae (strain DSM 45818 / CECT 9043 / HFP020203 / CcI3), this protein is Phosphopantetheine adenylyltransferase.